The chain runs to 407 residues: NADH-quinone oxidoreductase subunit D (407 aa).

Belongs to the complex I 49 kDa subunit family. NDH-1 is composed of 14 different subunits. Subunits NuoB, C, D, E, F, and G constitute the peripheral sector of the complex.

It is found in the cell inner membrane. The catalysed reaction is a quinone + NADH + 5 H(+)(in) = a quinol + NAD(+) + 4 H(+)(out). NDH-1 shuttles electrons from NADH, via FMN and iron-sulfur (Fe-S) centers, to quinones in the respiratory chain. The immediate electron acceptor for the enzyme in this species is believed to be ubiquinone. Couples the redox reaction to proton translocation (for every two electrons transferred, four hydrogen ions are translocated across the cytoplasmic membrane), and thus conserves the redox energy in a proton gradient. The polypeptide is NADH-quinone oxidoreductase subunit D (Roseobacter denitrificans (strain ATCC 33942 / OCh 114) (Erythrobacter sp. (strain OCh 114))).